The chain runs to 522 residues: MIRRALISVSDKTGLLPLARRLAEKGVEILSTGGTQRALADAGVPVIGVEAYTGSPEVMDGRVKTLHPRVHGGILMRGAIDDEDLARLGGAPIDLVVCNLYPFEATVRKPGVTHPEIIENIDIGGPSMVRSAAKNHARVAVVVDPADYDAVLAEIDRQGEVSSATRRRLATKAFAHTAAYDGMVSGYLSSLPEEGEPSAAEREAYPRFLTLALERAYPLRYGENPHQSGAFYRERGAAAGSLALAESLGAGGKELSFNNLVDVDAAFEAVREFTQPAAVVVKHTNPCGVATGDSLAAAYRTARDADAVSAFGGIVALNREVDRAAAEVLVETFLECVVAPAYTPDALEVLRTKKNLRLLATGALLPADHRELTFKRVGGGLVVQERDASAAGEVRGGRVVAKRAPTEEEIEALDLGWRVCKHVKSNAIVLAIPGRTVGIGAGQMSRVESVRIACSKAGERARGSVLASDAFFPFPDNVVLAAEHGITAVAQPGGSVKDAEVIAAADAAGIAMVFTGARHFRH.

Positions 1–143 (MIRRALISVS…KNHARVAVVV (143 aa)) constitute an MGS-like domain.

Belongs to the PurH family.

It carries out the reaction (6R)-10-formyltetrahydrofolate + 5-amino-1-(5-phospho-beta-D-ribosyl)imidazole-4-carboxamide = 5-formamido-1-(5-phospho-D-ribosyl)imidazole-4-carboxamide + (6S)-5,6,7,8-tetrahydrofolate. The enzyme catalyses IMP + H2O = 5-formamido-1-(5-phospho-D-ribosyl)imidazole-4-carboxamide. It participates in purine metabolism; IMP biosynthesis via de novo pathway; 5-formamido-1-(5-phospho-D-ribosyl)imidazole-4-carboxamide from 5-amino-1-(5-phospho-D-ribosyl)imidazole-4-carboxamide (10-formyl THF route): step 1/1. Its pathway is purine metabolism; IMP biosynthesis via de novo pathway; IMP from 5-formamido-1-(5-phospho-D-ribosyl)imidazole-4-carboxamide: step 1/1. The sequence is that of Bifunctional purine biosynthesis protein PurH from Sorangium cellulosum (strain So ce56) (Polyangium cellulosum (strain So ce56)).